A 466-amino-acid polypeptide reads, in one-letter code: Oryzain beta chain (466 aa).

Positions 1 to 21 are cleaved as a signal peptide; it reads MAARAAAAAFLLLLIVGAATA. Positions 22-140 are cleaved as a propeptide — activation peptide; that stretch reads APDMSIISYN…ERYRHDGVEE (119 aa). 3 disulfide bridges follow: Cys-162/Cys-205, Cys-196/Cys-238, and Cys-296/Cys-347. Cys-165 is an active-site residue. Active-site residues include His-302 and Asn-322. Residue Asn-341 is glycosylated (N-linked (GlcNAc...) asparagine). The interval 358 to 380 is disordered; the sequence is KSGANPPKPSPTPPTPPTPPPPS. Residues 362–466 constitute a propeptide, removed in mature form; the sequence is NPPKPSPTPP…KRTLAKLNTA (105 aa). Residues 363–380 show a composition bias toward pro residues; that stretch reads PPKPSPTPPTPPTPPPPS. Intrachain disulfides connect Cys-386/Cys-398 and Cys-392/Cys-413. The N-linked (GlcNAc...) asparagine glycan is linked to Asn-389.

This sequence belongs to the peptidase C1 family. As to expression, expressed only in seeds.

Its function is as follows. Probable thiol protease. The chain is Oryzain beta chain from Oryza sativa subsp. japonica (Rice).